A 426-amino-acid chain; its full sequence is Gamma-glutamyl phosphate reductase (426 aa).

The protein belongs to the gamma-glutamyl phosphate reductase family.

Its subcellular location is the cytoplasm. It carries out the reaction L-glutamate 5-semialdehyde + phosphate + NADP(+) = L-glutamyl 5-phosphate + NADPH + H(+). The protein operates within amino-acid biosynthesis; L-proline biosynthesis; L-glutamate 5-semialdehyde from L-glutamate: step 2/2. Catalyzes the NADPH-dependent reduction of L-glutamate 5-phosphate into L-glutamate 5-semialdehyde and phosphate. The product spontaneously undergoes cyclization to form 1-pyrroline-5-carboxylate. This chain is Gamma-glutamyl phosphate reductase, found in Cupriavidus metallidurans (strain ATCC 43123 / DSM 2839 / NBRC 102507 / CH34) (Ralstonia metallidurans).